Reading from the N-terminus, the 284-residue chain is 2-dehydro-3-deoxyphosphooctonate aldolase (284 aa).

It belongs to the KdsA family.

Its subcellular location is the cytoplasm. It catalyses the reaction D-arabinose 5-phosphate + phosphoenolpyruvate + H2O = 3-deoxy-alpha-D-manno-2-octulosonate-8-phosphate + phosphate. It participates in carbohydrate biosynthesis; 3-deoxy-D-manno-octulosonate biosynthesis; 3-deoxy-D-manno-octulosonate from D-ribulose 5-phosphate: step 2/3. The protein operates within bacterial outer membrane biogenesis; lipopolysaccharide biosynthesis. In Histophilus somni (strain 2336) (Haemophilus somnus), this protein is 2-dehydro-3-deoxyphosphooctonate aldolase.